Here is a 454-residue protein sequence, read N- to C-terminus: Transmembrane protease serine 3 (454 aa).

Residues 1-48 (MGENDPPAVEAPFSFRSLFGLDDLKISPVAPDADAVAAQILSLLPLKF) are Cytoplasmic-facing. A helical; Signal-anchor for type II membrane protein membrane pass occupies residues 49 to 69 (FPIIVIGIIALILALAIGLGI). At 70–454 (HFDCSGKYRC…HEQMERDLKT (385 aa)) the chain is on the extracellular side. Positions 72-108 (DCSGKYRCRSSFKCIELIARCDGVSDCKDGEDEYRCV) constitute an LDL-receptor class A domain. 10 disulfides stabilise this stretch: cysteine 73/cysteine 85, cysteine 79/cysteine 98, cysteine 92/cysteine 107, cysteine 129/cysteine 194, cysteine 142/cysteine 204, cysteine 207/cysteine 324, cysteine 242/cysteine 258, cysteine 338/cysteine 407, cysteine 370/cysteine 386, and cysteine 397/cysteine 425. Residues 109-205 (RVGGQNAVLQ…SGHVVTLQCT (97 aa)) enclose the SRCR domain. Residues 217 to 449 (IVGGNMSLLS…FLDWIHEQME (233 aa)) form the Peptidase S1 domain. A glycan (N-linked (GlcNAc...) asparagine) is linked at asparagine 221. Catalysis depends on charge relay system residues histidine 257 and aspartate 304. Serine 401 serves as the catalytic Charge relay system.

It belongs to the peptidase S1 family. Post-translationally, undergoes autoproteolytic activation. As to expression, expressed in many tissues including fetal cochlea. Isoform T is found at increased levels in some carcinomas.

The protein localises to the endoplasmic reticulum membrane. Probable serine protease that plays a role in hearing. Acts as a permissive factor for cochlear hair cell survival and activation at the onset of hearing and is required for saccular hair cell survival. Activates ENaC (in vitro). This Homo sapiens (Human) protein is Transmembrane protease serine 3 (TMPRSS3).